The chain runs to 373 residues: 4-hydroxy-3-methylbut-2-en-1-yl diphosphate synthase (flavodoxin) (373 aa).

The [4Fe-4S] cluster site is built by Cys270, Cys273, Cys305, and Glu312.

Belongs to the IspG family. It depends on [4Fe-4S] cluster as a cofactor.

The catalysed reaction is (2E)-4-hydroxy-3-methylbut-2-enyl diphosphate + oxidized [flavodoxin] + H2O + 2 H(+) = 2-C-methyl-D-erythritol 2,4-cyclic diphosphate + reduced [flavodoxin]. Its pathway is isoprenoid biosynthesis; isopentenyl diphosphate biosynthesis via DXP pathway; isopentenyl diphosphate from 1-deoxy-D-xylulose 5-phosphate: step 5/6. In terms of biological role, converts 2C-methyl-D-erythritol 2,4-cyclodiphosphate (ME-2,4cPP) into 1-hydroxy-2-methyl-2-(E)-butenyl 4-diphosphate. In Erwinia tasmaniensis (strain DSM 17950 / CFBP 7177 / CIP 109463 / NCPPB 4357 / Et1/99), this protein is 4-hydroxy-3-methylbut-2-en-1-yl diphosphate synthase (flavodoxin).